We begin with the raw amino-acid sequence, 463 residues long: UDP-N-acetylmuramoylalanine--D-glutamate ligase (463 aa).

ATP is bound at residue 109–115 (GTDGKST).

The protein belongs to the MurCDEF family.

It is found in the cytoplasm. The enzyme catalyses UDP-N-acetyl-alpha-D-muramoyl-L-alanine + D-glutamate + ATP = UDP-N-acetyl-alpha-D-muramoyl-L-alanyl-D-glutamate + ADP + phosphate + H(+). It functions in the pathway cell wall biogenesis; peptidoglycan biosynthesis. Functionally, cell wall formation. Catalyzes the addition of glutamate to the nucleotide precursor UDP-N-acetylmuramoyl-L-alanine (UMA). The polypeptide is UDP-N-acetylmuramoylalanine--D-glutamate ligase (Leptospira interrogans serogroup Icterohaemorrhagiae serovar Lai (strain 56601)).